Here is a 387-residue protein sequence, read N- to C-terminus: Xylose operon regulatory protein (387 aa).

The HTH araC/xylS-type domain maps to 288–386 (IQAMHYIRHR…EMTPKEFRLN (99 aa)). DNA-binding regions (H-T-H motif) lie at residues 305–326 (GQVL…KNEM) and 353–376 (IKEI…KKEF).

Regulatory protein for the xylBAFGHR operon. The sequence is that of Xylose operon regulatory protein (xylR) from Haemophilus influenzae (strain ATCC 51907 / DSM 11121 / KW20 / Rd).